Consider the following 400-residue polypeptide: Chalcone synthase WHP1 (400 aa).

The active site involves C167.

It belongs to the thiolase-like superfamily. Chalcone/stilbene synthases family.

The catalysed reaction is (E)-4-coumaroyl-CoA + 3 malonyl-CoA + 3 H(+) = 2',4,4',6'-tetrahydroxychalcone + 3 CO2 + 4 CoA. It functions in the pathway secondary metabolite biosynthesis; flavonoid biosynthesis. The primary product of this enzyme is 4,2',4',6'-tetrahydroxychalcone (also termed naringenin-chalcone or chalcone) which can under specific conditions spontaneously isomerize into naringenin. This Zea mays (Maize) protein is Chalcone synthase WHP1 (WHP1).